The primary structure comprises 415 residues: D-galactonate dehydratase family member RspA (415 aa).

Substrate-binding residues include N48 and H133. The Proton donor/acceptor role is filled by Y170. Mg(2+) is bound at residue D223. H225 acts as the Proton donor/acceptor in catalysis. E249 and E275 together coordinate Mg(2+). E275, R296, H325, D329, and E352 together coordinate substrate.

It belongs to the mandelate racemase/muconate lactonizing enzyme family. GalD subfamily. Mg(2+) serves as cofactor.

It carries out the reaction D-mannonate = 2-dehydro-3-deoxy-D-gluconate + H2O. Its function is as follows. Has low D-mannonate dehydratase activity (in vitro), suggesting that this is not a physiological substrate and that it has no significant role in D-mannonate degradation in vivo. Has no detectable activity with a panel of 70 other acid sugars (in vitro). The polypeptide is D-galactonate dehydratase family member RspA (rspA) (Escherichia coli (strain MS 21-1)).